Reading from the N-terminus, the 153-residue chain is MKAVCVMTGTAGVKGVVKFTQETDNGPVHVHAEFSGLKAGKHGFHVHEFGDTTNGCTSAGAHFNPTKQEHGAPEDSIRHVGDLGNVVAGADGNAVYNATDKLISLNGSHSIIGRTMVIHENEDDLGRGGHELSKVTGNAGGRLACGVIGLAAE.

H45, H47, and H62 together coordinate Cu cation. C56 and C145 are oxidised to a cystine. Zn(2+) contacts are provided by H62, H70, H79, and D82. H119 lines the Cu cation pocket.

This sequence belongs to the Cu-Zn superoxide dismutase family. In terms of assembly, homodimer. The cofactor is Cu cation. Zn(2+) serves as cofactor.

It localises to the cytoplasm. It carries out the reaction 2 superoxide + 2 H(+) = H2O2 + O2. Its function is as follows. Destroys radicals which are normally produced within the cells and which are toxic to biological systems. The polypeptide is Superoxide dismutase [Cu-Zn] (SOD) (Schistosoma mansoni (Blood fluke)).